The following is a 229-amino-acid chain: MKSLLPISSLLVLLGSASAFAADLNIPMSFEYLALDGKKVESSVFNHKSSLELTPGTHKIAIRYHEMVEDDFSDSQTFVKSAPFIVTLDVDGDYQYYLQAAEGKVVKKPKVYAQNPQIKLTRGDKGDVNFQVVNTNLEEESFVSRLFSGNQAVDVSGTAAAATGAAGAVVAVAPAPVATSATVSATSLTAPVDTSKATAANPQQMLQYWWLQADEKTRKEFMSWAISQL.

The first 21 residues, 1–21 (MKSLLPISSLLVLLGSASAFA), serve as a signal peptide directing secretion.

Belongs to the UPF0319 family.

This is UPF0319 protein Sbal223_2728 from Shewanella baltica (strain OS223).